We begin with the raw amino-acid sequence, 477 residues long: Regulator of G-protein signaling 7 (477 aa).

One can recognise a DEP domain in the interval 37 to 112 (EKNGIPIRTV…DDGTFYRFQT (76 aa)). 2 positions are modified to phosphoserine: Ser229 and Ser241. Positions 236-257 (DIRSHSPTHTPTPETKPPTEDE) are disordered. Thr243 is modified (phosphothreonine). A G protein gamma domain is found at 255–316 (EDELHRQIKY…LSDDTTFWEL (62 aa)). Residues 333–448 (GMDEALKDPV…IRSSAYQELL (116 aa)) enclose the RGS domain. Ser434 is subject to Phosphoserine.

In terms of assembly, interacts with GNB5, forming the RGS7-GNB5 complex. Interacts with GPR158; promotes the GTPase activator activity of the RGS7-GNB5 complex in absence of glycine, in contrast GTPase activator activity of the RGS7-GNB5 complex is inhibited in presence of glycine. Interacts with GPR179. Interacts with PKD1; this prevents rapid proteasomal degradation. Interacts with RGS7BP, leading to regulate the subcellular location of the heterodimer formed with GNB5. Interacts (phosphorylated form) with 14-3-3 protein YWHAQ. Interacts with SNAPIN. Interacts with GNAI1. Interacts with GNAO1, GNAI3 and GNAZ. Palmitoylated. In terms of processing, ubiquitinated, leading to rapid proteasomal degradation. Post-translationally, phosphorylation and subsequent interaction with 14-3-3 proteins inhibits GAP activity. As to expression, brain-specific. Predominantly cerebellar granule cells.

It is found in the cytoplasm. Its subcellular location is the cytosol. It localises to the cell membrane. The protein localises to the membrane. Its function is as follows. GTPase activator component of the RGS7-GNB5 complex that regulates G protein-coupled receptor signaling cascades. The RGS7-GNB5 complex acts as an inhibitor signal transduction by promoting the GTPase activity of G protein alpha subunits, such as GNAO1, thereby driving them into their inactive GDP-bound form. May play a role in synaptic vesicle exocytosis. Glycine-dependent regulation of the RGS7-GNB5 complex by GPR158 affects mood and cognition via its ability to regulate neuronal excitability in L2/L3 pyramidal neurons of the prefrontal cortex. Modulates the activity of potassium channels that are activated by GNAO1 in response to muscarinic acetylcholine receptor M2/CHRM2 signaling. The sequence is that of Regulator of G-protein signaling 7 (Rgs7) from Rattus norvegicus (Rat).